A 452-amino-acid chain; its full sequence is Exoglucanase 1 (452 aa).

The first 18 residues, 1-18 (MFSKFALTGSLLAGAVNA), serve as a signal peptide directing secretion. The N-linked (GlcNAc...) asparagine glycan is linked to asparagine 75. Glutamate 230 (nucleophile) is an active-site residue. The Proton donor role is filled by glutamate 235. Residues asparagine 335 and asparagine 360 are each glycosylated (N-linked (GlcNAc...) asparagine).

This sequence belongs to the glycosyl hydrolase 7 (cellulase C) family.

The enzyme catalyses Hydrolysis of (1-&gt;4)-beta-D-glucosidic linkages in cellulose and cellotetraose, releasing cellobiose from the non-reducing ends of the chains.. Its function is as follows. The biological conversion of cellulose to glucose generally requires three types of hydrolytic enzymes: (1) Endoglucanases which cut internal beta-1,4-glucosidic bonds; (2) Exocellobiohydrolases that cut the disaccharide cellobiose from the non-reducing end of the cellulose polymer chain; (3) Beta-1,4-glucosidases which hydrolyze the cellobiose and other short cello-oligosaccharides to glucose. The protein is Exoglucanase 1 (CBH-1) of Cryphonectria parasitica (Chestnut blight fungus).